Reading from the N-terminus, the 158-residue chain is Acetolactate synthase small subunit (158 aa).

The ACT domain maps to 4–79; it reads MIIAKLHNVT…DVIEVADITD (76 aa).

Belongs to the acetolactate synthase small subunit family. In terms of assembly, dimer of large and small chains.

The enzyme catalyses 2 pyruvate + H(+) = (2S)-2-acetolactate + CO2. It participates in amino-acid biosynthesis; L-isoleucine biosynthesis; L-isoleucine from 2-oxobutanoate: step 1/4. Its pathway is amino-acid biosynthesis; L-valine biosynthesis; L-valine from pyruvate: step 1/4. In Lactococcus lactis subsp. lactis (strain IL1403) (Streptococcus lactis), this protein is Acetolactate synthase small subunit (ilvH).